Consider the following 408-residue polypeptide: Tryptophan synthase beta chain (408 aa).

N6-(pyridoxal phosphate)lysine is present on Lys-97.

Belongs to the TrpB family. In terms of assembly, tetramer of two alpha and two beta chains. Pyridoxal 5'-phosphate serves as cofactor.

It catalyses the reaction (1S,2R)-1-C-(indol-3-yl)glycerol 3-phosphate + L-serine = D-glyceraldehyde 3-phosphate + L-tryptophan + H2O. Its pathway is amino-acid biosynthesis; L-tryptophan biosynthesis; L-tryptophan from chorismate: step 5/5. In terms of biological role, the beta subunit is responsible for the synthesis of L-tryptophan from indole and L-serine. The protein is Tryptophan synthase beta chain (trpB) of Pseudomonas syringae pv. syringae.